The sequence spans 208 residues: Imidazoleglycerol-phosphate dehydratase (208 aa).

The protein belongs to the imidazoleglycerol-phosphate dehydratase family.

It is found in the cytoplasm. It carries out the reaction D-erythro-1-(imidazol-4-yl)glycerol 3-phosphate = 3-(imidazol-4-yl)-2-oxopropyl phosphate + H2O. It participates in amino-acid biosynthesis; L-histidine biosynthesis; L-histidine from 5-phospho-alpha-D-ribose 1-diphosphate: step 6/9. The protein is Imidazoleglycerol-phosphate dehydratase of Prochlorococcus marinus (strain MIT 9211).